Reading from the N-terminus, the 97-residue chain is MHGNYTTLKEIVLQLEPPDPVGLHCNEQLDSSEDEVDELATQATQDVTQPYQIVTTCGTCSRKVRLVVQCTGTDIHHLHTLLLGSLDILCPVCAPKT.

The segment at 1–41 (MHGNYTTLKEIVLQLEPPDPVGLHCNEQLDSSEDEVDELAT) is E7 terminal domain. Residues 23–27 (LHCNE) carry the LXCXE motif; interaction with host RB1 and TMEM173/STING motif. A zinc finger lies at 57–93 (CGTCSRKVRLVVQCTGTDIHHLHTLLLGSLDILCPVC). Residues 75 to 83 (IHHLHTLLL) carry the Nuclear export signal motif.

The protein belongs to the papillomaviridae E7 protein family. As to quaternary structure, homodimer. Homooligomer. Interacts with host RB1; this interaction induces dissociation of RB1-E2F1 complex thereby disrupting RB1 activity. Interacts with host EP300; this interaction represses EP300 transcriptional activity. Interacts with protein E2; this interaction inhibits E7 oncogenic activity. Interacts with host TMEM173/STING; this interaction impairs the ability of TMEM173/STING to sense cytosolic DNA and promote the production of type I interferon (IFN-alpha and IFN-beta). Post-translationally, highly phosphorylated.

It localises to the host cytoplasm. It is found in the host nucleus. Its function is as follows. Plays a role in viral genome replication by driving entry of quiescent cells into the cell cycle. Stimulation of progression from G1 to S phase allows the virus to efficiently use the cellular DNA replicating machinery to achieve viral genome replication. E7 protein has both transforming and trans-activating activities. Induces the disassembly of the E2F1 transcription factor from RB1, with subsequent transcriptional activation of E2F1-regulated S-phase genes. Interferes with host histone deacetylation mediated by HDAC1 and HDAC2, leading to transcription activation. Also plays a role in the inhibition of both antiviral and antiproliferative functions of host interferon alpha. Interaction with host TMEM173/STING impairs the ability of TMEM173/STING to sense cytosolic DNA and promote the production of type I interferon (IFN-alpha and IFN-beta). The sequence is that of Protein E7 from Homo sapiens (Human).